Here is a 115-residue protein sequence, read N- to C-terminus: Nucleoid-associated protein LA_4332 (115 aa).

It belongs to the YbaB/EbfC family. Homodimer.

It is found in the cytoplasm. Its subcellular location is the nucleoid. Functionally, binds to DNA and alters its conformation. May be involved in regulation of gene expression, nucleoid organization and DNA protection. This chain is Nucleoid-associated protein LA_4332, found in Leptospira interrogans serogroup Icterohaemorrhagiae serovar Lai (strain 56601).